A 1214-amino-acid chain; its full sequence is RNA-directed RNA polymerase VP1 (1214 aa).

The 196-residue stretch at 610-805 (APHDVMAPQL…KRTIVGNNVA (196 aa)) folds into the RdRp catalytic domain.

It belongs to the reoviridae RNA-directed RNA polymerase family.

Its subcellular location is the virion. It carries out the reaction RNA(n) + a ribonucleoside 5'-triphosphate = RNA(n+1) + diphosphate. Its function is as follows. RNA-directed RNA polymerase that is involved in transcription and genome replication. Following infection, it catalyzes the synthesis of fully conservative plus strands. After core assembly, which consists in recruitment of one capped plus-strand for each genomic segments and polymerase complexes, the polymerase switches mode and catalyzes the synthesis of complementary minus-strands. In Banna virus (BAV), this protein is RNA-directed RNA polymerase VP1 (Segment-1).